A 1064-amino-acid polypeptide reads, in one-letter code: MPKRNDIKKIMIIGSGPIIIGQAAEFDYAGTQACLALKEEGYEVVLVNSNPATIMTDREIADTVYIEPITLEFVSKILRKERPDALLPTLGGQTGLNMAMELSKIGILEELNVELLGTKLSAIDQAEDRELFKELCERIGEPLCASDIATTVDEAVEIADKIGYPIIVRPAFTMGGTGGGICDTEEELREIVANGLKLSPVTQCLIEESIAGYKEIEYEVMRDSADNAIVVCNMENFDPVGVHTGDSIVFAPSQTLSDNEYQMLRDASLNIIRALKIEGGCNVQLALDPHSYEYRVIEVNPRVSRSSALASKATGYPIAKMSAKIAIGMTLDEIINPVTNKTYAMFEPALDYVVAKIARFPFDKFENGDRHLGTQMKATGEVMAIGRNIEESLLKAVRSLEIGVFHNDLQEAQDADDEILYEKMVKTQDDRLFYVSEAIRRGIPIEEIADLTKIDIFFLDKLLHIVEIEDQLKVNIFEPELLKTAKKNGFSDRQIAKLWNVSPEEVRRRRQENRTIPVYKMVDTCAAEFESSTPYFYSTYEWENESKRSSKEKIIVLGSGPIRIGQGVEFDYATVHCVKALQALGKEAIVINSNPETVSTDFSISDKLYFEPLTFEDVMNIIDLEQPEGVIVQFGGQTAINLAEPLSKAGVKILGTQVEDLDRAEDRDLFEKALQDLEIPQPPGATATNEEEAVANANKIGYPVLIRPSFVLGGRAMEIINNEKDLRDYMNRAVKASPEHPVLVDSYLQGRECEVDAICDGTEVLLPGIMEHIERAGVHSGDSMAVYPPQTFSQEIIDTIVDYTKRLAIGLNCIGMMNIQFVIFEEQVYVIEVNPRASRTVPFLSKVTNIPMAQLATQMILGKNLKDLGYTEGLAETPDMVHVKAPVFSFTKLAKVDSLLGPEMKSTGEAMGSDVTLEKALYKSFEAAKLHMADYGSVLFTVADEDKEETLALAKDFAEIGYSLVATQGTAAFFKENGLYVREVEKLAGGEDEEGTLVEDIRHGRVQAVVNTMGNTRASLTTATDGFRIRQEAISRGIPLFTSLDTVAAILKVMQSRSFTTKNI.

Residues 1-401 (MPKRNDIKKI…SLLKAVRSLE (401 aa)) form a carboxyphosphate synthetic domain region. 12 residues coordinate ATP: Arg129, Arg169, Gly175, Gly176, Glu208, Ile210, Glu215, Gly241, Val242, His243, Gln284, and Glu298. One can recognise an ATP-grasp 1 domain in the interval 133–327 (KELCERIGEP…IAKMSAKIAI (195 aa)). The Mg(2+) site is built by Gln284, Glu298, and Asn300. Mn(2+) contacts are provided by Gln284, Glu298, and Asn300. Residues 402–546 (IGVFHNDLQE…YSTYEWENES (145 aa)) form an oligomerization domain region. The carbamoyl phosphate synthetic domain stretch occupies residues 547–929 (KRSSKEKIIV…ALYKSFEAAK (383 aa)). The region spanning 671–861 (EKALQDLEIP…MAQLATQMIL (191 aa)) is the ATP-grasp 2 domain. Residues Arg707, Ser746, Leu748, Glu752, Gly777, Val778, His779, Ser780, Gln820, and Glu832 each contribute to the ATP site. Mg(2+) is bound by residues Gln820, Glu832, and Asn834. Residues Gln820, Glu832, and Asn834 each coordinate Mn(2+). One can recognise an MGS-like domain in the interval 930 to 1064 (LHMADYGSVL…QSRSFTTKNI (135 aa)). Residues 930 to 1064 (LHMADYGSVL…QSRSFTTKNI (135 aa)) are allosteric domain.

Belongs to the CarB family. Composed of two chains; the small (or glutamine) chain promotes the hydrolysis of glutamine to ammonia, which is used by the large (or ammonia) chain to synthesize carbamoyl phosphate. Tetramer of heterodimers (alpha,beta)4. Requires Mg(2+) as cofactor. Mn(2+) is required as a cofactor.

It catalyses the reaction hydrogencarbonate + L-glutamine + 2 ATP + H2O = carbamoyl phosphate + L-glutamate + 2 ADP + phosphate + 2 H(+). The enzyme catalyses hydrogencarbonate + NH4(+) + 2 ATP = carbamoyl phosphate + 2 ADP + phosphate + 2 H(+). Its pathway is amino-acid biosynthesis; L-arginine biosynthesis; carbamoyl phosphate from bicarbonate: step 1/1. The protein operates within pyrimidine metabolism; UMP biosynthesis via de novo pathway; (S)-dihydroorotate from bicarbonate: step 1/3. Its function is as follows. Large subunit of the glutamine-dependent carbamoyl phosphate synthetase (CPSase). CPSase catalyzes the formation of carbamoyl phosphate from the ammonia moiety of glutamine, carbonate, and phosphate donated by ATP, constituting the first step of 2 biosynthetic pathways, one leading to arginine and/or urea and the other to pyrimidine nucleotides. The large subunit (synthetase) binds the substrates ammonia (free or transferred from glutamine from the small subunit), hydrogencarbonate and ATP and carries out an ATP-coupled ligase reaction, activating hydrogencarbonate by forming carboxy phosphate which reacts with ammonia to form carbamoyl phosphate. In Lactococcus lactis subsp. lactis (strain IL1403) (Streptococcus lactis), this protein is Carbamoyl phosphate synthase large chain.